Here is a 578-residue protein sequence, read N- to C-terminus: Potassium-transporting ATPase potassium-binding subunit (578 aa).

The next 11 membrane-spanning stretches (helical) occupy residues 3–23 (AAAL…AVPL), 67–87 (AAAA…LERL), 95–115 (PAGL…SFAT), 136–156 (ALTV…AALV), 181–201 (LLLP…VPQT), 264–284 (LEAL…GALV), 291–311 (WTVY…TVSA), 396–416 (GLYG…LMVG), 436–456 (LAIL…CLLP), 504–524 (VAML…AGAF), and 543–563 (LFAG…FLPA).

Belongs to the KdpA family. In terms of assembly, the system is composed of three essential subunits: KdpA, KdpB and KdpC.

It localises to the cell inner membrane. Its function is as follows. Part of the high-affinity ATP-driven potassium transport (or Kdp) system, which catalyzes the hydrolysis of ATP coupled with the electrogenic transport of potassium into the cytoplasm. This subunit binds the periplasmic potassium ions and delivers the ions to the membrane domain of KdpB through an intramembrane tunnel. This is Potassium-transporting ATPase potassium-binding subunit from Anaeromyxobacter dehalogenans (strain 2CP-C).